The primary structure comprises 521 residues: Exodeoxyribonuclease 7 large subunit (521 aa).

The disordered stretch occupies residues 494-521; sequence ATSGAARPKPAAKPSTKAKEPGNQGSLF. A compositionally biased stretch (low complexity) spans 498–508; it reads AARPKPAAKPS.

This sequence belongs to the XseA family. As to quaternary structure, heterooligomer composed of large and small subunits.

It localises to the cytoplasm. The enzyme catalyses Exonucleolytic cleavage in either 5'- to 3'- or 3'- to 5'-direction to yield nucleoside 5'-phosphates.. Bidirectionally degrades single-stranded DNA into large acid-insoluble oligonucleotides, which are then degraded further into small acid-soluble oligonucleotides. The protein is Exodeoxyribonuclease 7 large subunit of Mesorhizobium japonicum (strain LMG 29417 / CECT 9101 / MAFF 303099) (Mesorhizobium loti (strain MAFF 303099)).